The following is a 305-amino-acid chain: Glycine--tRNA ligase alpha subunit (305 aa).

This sequence belongs to the class-II aminoacyl-tRNA synthetase family. In terms of assembly, tetramer of two alpha and two beta subunits.

It is found in the cytoplasm. The catalysed reaction is tRNA(Gly) + glycine + ATP = glycyl-tRNA(Gly) + AMP + diphosphate. This chain is Glycine--tRNA ligase alpha subunit, found in Streptococcus pyogenes serotype M12 (strain MGAS2096).